The sequence spans 242 residues: Ribose-5-phosphate isomerase A (242 aa).

Substrate contacts are provided by residues 39 to 42 (SGST), 95 to 98 (DGAD), and 108 to 111 (KGGG). The active-site Proton acceptor is the glutamate 117. Lysine 135 contacts substrate.

The protein belongs to the ribose 5-phosphate isomerase family. Homodimer.

It carries out the reaction aldehydo-D-ribose 5-phosphate = D-ribulose 5-phosphate. Its pathway is carbohydrate degradation; pentose phosphate pathway; D-ribose 5-phosphate from D-ribulose 5-phosphate (non-oxidative stage): step 1/1. Catalyzes the reversible conversion of ribose-5-phosphate to ribulose 5-phosphate. The sequence is that of Ribose-5-phosphate isomerase A from Chlamydia trachomatis serovar L2 (strain ATCC VR-902B / DSM 19102 / 434/Bu).